Reading from the N-terminus, the 85-residue chain is Small ribosomal subunit protein uS17 (85 aa).

It belongs to the universal ribosomal protein uS17 family. In terms of assembly, part of the 30S ribosomal subunit.

Its function is as follows. One of the primary rRNA binding proteins, it binds specifically to the 5'-end of 16S ribosomal RNA. The protein is Small ribosomal subunit protein uS17 of Pasteurella multocida (strain Pm70).